We begin with the raw amino-acid sequence, 157 residues long: ADP-ribosylation factor-like protein 2-binding protein (157 aa).

This sequence belongs to the ARL2BP family.

Its subcellular location is the cytoplasm. It is found in the mitochondrion intermembrane space. It localises to the cytoskeleton. The protein resides in the microtubule organizing center. The protein localises to the centrosome. Its subcellular location is the nucleus. It is found in the spindle. It localises to the cilium basal body. Functionally, plays a role as an effector of the ADP-ribosylation factor-like protein 2, ARL2. This chain is ADP-ribosylation factor-like protein 2-binding protein (arl2bp), found in Xenopus tropicalis (Western clawed frog).